Consider the following 291-residue polypeptide: Ribose-phosphate pyrophosphokinase (291 aa).

Residues 34-36 and 93-94 each bind ATP; these read DGE and RQ. Positions 127 and 165 each coordinate Mg(2+). Lysine 188 is an active-site residue. D-ribose 5-phosphate is bound by residues arginine 190, aspartate 216, and 220-224; that span reads STGGT.

The protein belongs to the ribose-phosphate pyrophosphokinase family. Class III (archaeal) subfamily. As to quaternary structure, homodimer. The cofactor is Mg(2+).

Its subcellular location is the cytoplasm. The catalysed reaction is D-ribose 5-phosphate + ATP = 5-phospho-alpha-D-ribose 1-diphosphate + AMP + H(+). Its pathway is metabolic intermediate biosynthesis; 5-phospho-alpha-D-ribose 1-diphosphate biosynthesis; 5-phospho-alpha-D-ribose 1-diphosphate from D-ribose 5-phosphate (route I): step 1/1. Functionally, involved in the biosynthesis of the central metabolite phospho-alpha-D-ribosyl-1-pyrophosphate (PRPP) via the transfer of pyrophosphoryl group from ATP to 1-hydroxyl of ribose-5-phosphate (Rib-5-P). This is Ribose-phosphate pyrophosphokinase from Saccharolobus solfataricus (strain ATCC 35092 / DSM 1617 / JCM 11322 / P2) (Sulfolobus solfataricus).